The sequence spans 548 residues: 5-aminolevulinate synthase, mitochondrial (548 aa).

The transit peptide at 1 to 22 directs the protein to the mitochondrion; it reads MQRSIFARFGNSSAAVSTLNRL. 3 residues coordinate substrate: Arg-91, Ser-204, and Lys-223. Positions 256, 284, and 334 each coordinate pyridoxal 5'-phosphate. Lys-337 is an active-site residue. Lys-337 bears the N6-(pyridoxal phosphate)lysine mark. Pyridoxal 5'-phosphate-binding residues include Thr-366 and Thr-367. A substrate-binding site is contributed by Thr-452.

It belongs to the class-II pyridoxal-phosphate-dependent aminotransferase family. In terms of assembly, homodimer. Interacts with MCX1. Requires pyridoxal 5'-phosphate as cofactor.

The protein localises to the mitochondrion matrix. It catalyses the reaction succinyl-CoA + glycine + H(+) = 5-aminolevulinate + CO2 + CoA. Its pathway is porphyrin-containing compound metabolism; protoporphyrin-IX biosynthesis; 5-aminolevulinate from glycine: step 1/1. Ihnhibited by hemin. Functionally, catalyzes the synthesis of 5-aminolevulinate (ALA) from succinyl-CoA and glycine, the first and rate-limiting step in heme biosynthesis. The chain is 5-aminolevulinate synthase, mitochondrial from Saccharomyces cerevisiae (strain ATCC 204508 / S288c) (Baker's yeast).